A 149-amino-acid chain; its full sequence is MHCPFCFAVDTKVIDSRLVGEGSSVRRRRQCLVCNERFTTFEVAELVMPRVVKSNDVREPFNEEKLRSGMLRALEKRPVSSDDVEMAISHIKSQLRATGEREVPSKMIGNLVMEQLKKLDKVAYIRFASVYRSFEDIKEFGEEIARLED.

Residues 3–34 fold into a zinc finger; the sequence is CPFCFAVDTKVIDSRLVGEGSSVRRRRQCLVC. Residues 49–139 form the ATP-cone domain; that stretch reads PRVVKSNDVR…VYRSFEDIKE (91 aa).

Belongs to the NrdR family. The cofactor is Zn(2+).

Its function is as follows. Negatively regulates transcription of bacterial ribonucleotide reductase nrd genes and operons by binding to NrdR-boxes. The polypeptide is Transcriptional repressor NrdR (Escherichia fergusonii (strain ATCC 35469 / DSM 13698 / CCUG 18766 / IAM 14443 / JCM 21226 / LMG 7866 / NBRC 102419 / NCTC 12128 / CDC 0568-73)).